Reading from the N-terminus, the 254-residue chain is Imidazole glycerol phosphate synthase subunit HisF (254 aa).

Residues D13 and D132 contribute to the active site.

The protein belongs to the HisA/HisF family. As to quaternary structure, heterodimer of HisH and HisF.

The protein localises to the cytoplasm. It carries out the reaction 5-[(5-phospho-1-deoxy-D-ribulos-1-ylimino)methylamino]-1-(5-phospho-beta-D-ribosyl)imidazole-4-carboxamide + L-glutamine = D-erythro-1-(imidazol-4-yl)glycerol 3-phosphate + 5-amino-1-(5-phospho-beta-D-ribosyl)imidazole-4-carboxamide + L-glutamate + H(+). It functions in the pathway amino-acid biosynthesis; L-histidine biosynthesis; L-histidine from 5-phospho-alpha-D-ribose 1-diphosphate: step 5/9. IGPS catalyzes the conversion of PRFAR and glutamine to IGP, AICAR and glutamate. The HisF subunit catalyzes the cyclization activity that produces IGP and AICAR from PRFAR using the ammonia provided by the HisH subunit. This is Imidazole glycerol phosphate synthase subunit HisF from Wolinella succinogenes (strain ATCC 29543 / DSM 1740 / CCUG 13145 / JCM 31913 / LMG 7466 / NCTC 11488 / FDC 602W) (Vibrio succinogenes).